A 445-amino-acid polypeptide reads, in one-letter code: Deoxyribodipyrimidine photo-lyase (445 aa).

The Photolyase/cryptochrome alpha/beta domain maps to 20–148 (SYVVYWMQAS…QVESNVIVPV (129 aa)). Residue Arg239 coordinates DNA.

The protein belongs to the DNA photolyase class-2 family. The cofactor is FAD. Coenzyme F420-(gamma-Glu)n serves as cofactor.

It catalyses the reaction cyclobutadipyrimidine (in DNA) = 2 pyrimidine residues (in DNA).. Its function is as follows. Involved in repair of UV radiation-induced DNA damage. Catalyzes the light-dependent monomerization (300-600 nm) of cyclobutyl pyrimidine dimers (in cis-syn configuration), which are formed between adjacent bases on the same DNA strand upon exposure to ultraviolet radiation. The chain is Deoxyribodipyrimidine photo-lyase (phr) from Methanothermobacter thermautotrophicus (strain ATCC 29096 / DSM 1053 / JCM 10044 / NBRC 100330 / Delta H) (Methanobacterium thermoautotrophicum).